The primary structure comprises 454 residues: Putative serine carboxypeptidase-like 23 (454 aa).

Positions 1 to 22 (MARIHLIIILLVISSTSSSSSS) are cleaved as a signal peptide. N-linked (GlcNAc...) asparagine glycosylation is found at Asn-52, Asn-102, and Asn-136. 3 disulfides stabilise this stretch: Cys-85-Cys-338, Cys-247-Cys-258, and Cys-282-Cys-306. Ser-178 is an active-site residue. N-linked (GlcNAc...) asparagine glycans are attached at residues Asn-287 and Asn-327. Residues Asp-375 and His-427 contribute to the active site.

Belongs to the peptidase S10 family. In terms of tissue distribution, expression not detected.

The protein localises to the secreted. In terms of biological role, probable carboxypeptidase. The sequence is that of Putative serine carboxypeptidase-like 23 (SCPL23) from Arabidopsis thaliana (Mouse-ear cress).